Here is a 448-residue protein sequence, read N- to C-terminus: Probable glycine dehydrogenase (decarboxylating) subunit 1 (448 aa).

Belongs to the GcvP family. N-terminal subunit subfamily. The glycine cleavage system is composed of four proteins: P, T, L and H. In this organism, the P 'protein' is a heterodimer of two subunits.

The enzyme catalyses N(6)-[(R)-lipoyl]-L-lysyl-[glycine-cleavage complex H protein] + glycine + H(+) = N(6)-[(R)-S(8)-aminomethyldihydrolipoyl]-L-lysyl-[glycine-cleavage complex H protein] + CO2. Its function is as follows. The glycine cleavage system catalyzes the degradation of glycine. The P protein binds the alpha-amino group of glycine through its pyridoxal phosphate cofactor; CO(2) is released and the remaining methylamine moiety is then transferred to the lipoamide cofactor of the H protein. This is Probable glycine dehydrogenase (decarboxylating) subunit 1 from Parvibaculum lavamentivorans (strain DS-1 / DSM 13023 / NCIMB 13966).